Reading from the N-terminus, the 114-residue chain is UPF0145 protein TT_C1581 (114 aa).

Belongs to the UPF0145 family.

In Thermus thermophilus (strain ATCC BAA-163 / DSM 7039 / HB27), this protein is UPF0145 protein TT_C1581.